The following is a 267-amino-acid chain: Undecaprenyl-diphosphatase (267 aa).

8 helical membrane passes run 1–21, 39–59, 87–107, 113–133, 144–164, 189–209, 219–239, and 244–264; these read MSEL…FLPI, QGLA…LIYF, WWIL…KSLV, SGYV…WADA, TGLK…IPGT, FLMS…KFIL, LFLG…VFLI, and VGMM…FYIL.

This sequence belongs to the UppP family.

It is found in the cell inner membrane. The catalysed reaction is di-trans,octa-cis-undecaprenyl diphosphate + H2O = di-trans,octa-cis-undecaprenyl phosphate + phosphate + H(+). In terms of biological role, catalyzes the dephosphorylation of undecaprenyl diphosphate (UPP). Confers resistance to bacitracin. The protein is Undecaprenyl-diphosphatase of Psychromonas ingrahamii (strain DSM 17664 / CCUG 51855 / 37).